Reading from the N-terminus, the 115-residue chain is MEKAYRIKRNSDFQAIYKNGKSVANRQFVVYTYKNRDLKHFRLGISVSKKLGNAVTRNRIKRAIRENFKVHKQNIIAKDIIVIARQPAKDMNTLEIQSSLEHVLKIAKVFNKKIK.

This sequence belongs to the RnpA family. As to quaternary structure, consists of a catalytic RNA component (M1 or rnpB) and a protein subunit.

The catalysed reaction is Endonucleolytic cleavage of RNA, removing 5'-extranucleotides from tRNA precursor.. Its function is as follows. RNaseP catalyzes the removal of the 5'-leader sequence from pre-tRNA to produce the mature 5'-terminus. It can also cleave other RNA substrates such as 4.5S RNA. The protein component plays an auxiliary but essential role in vivo by binding to the 5'-leader sequence and broadening the substrate specificity of the ribozyme. This Staphylococcus epidermidis (strain ATCC 35984 / DSM 28319 / BCRC 17069 / CCUG 31568 / BM 3577 / RP62A) protein is Ribonuclease P protein component.